The chain runs to 391 residues: Response regulator aspartate phosphatase I (391 aa).

6 TPR repeats span residues leucine 62–glycine 95, serine 150–threonine 183, valine 184–serine 217, alanine 224–serine 257, lysine 275–leucine 311, and glutamate 338–isoleucine 371.

It belongs to the Rap family.

It is found in the cytoplasm. With respect to regulation, inhibited by PhrI. In terms of biological role, activates ICEBs1 gene expression, excision and transfer by inactivating the ICEBs1 repressor protein ImmR. RapI-mediated induction likely results from an increase in the specific activity of the protease ImmA, which mediates proteolysis of ImmR. In addition, is involved in regulation of sporulation. Acts as a phosphatase that specifically dephosphorylates the sporulation initiation phosphotransferase Spo0F and inhibits its activity. The polypeptide is Response regulator aspartate phosphatase I (rapI) (Bacillus subtilis (strain 168)).